The sequence spans 610 residues: Solute carrier family 2, facilitated glucose transporter member 12 (610 aa).

The Cytoplasmic portion of the chain corresponds to 1-49 (MDAPEESIRMTSDPQSKIYVQNPDTHIHLEQGPSAKSGNGRALVLCSVS). The helical transmembrane segment at 50 to 70 (VACLSGLLMGYEMSLISGALL) threads the bilayer. The Extracellular portion of the chain corresponds to 71–84 (QLRDVLTLSCPEQE). A helical membrane pass occupies residues 85–105 (QVVGSLLLGAFLLSLGGGTIL). Topologically, residues 106–118 (DHYGRRFTIILTA) are cytoplasmic. A helical transmembrane segment spans residues 119–139 (LLCVLGTLLSVCVVSFWALVV). Residues 140 to 141 (GR) lie on the Extracellular side of the membrane. A helical transmembrane segment spans residues 142 to 162 (MLVGMSVALSGTASCLYAAEV). The Cytoplasmic segment spans residues 163-176 (APAAWRGRCVCVYE). A helical membrane pass occupies residues 177 to 197 (LMVVLGMLLGFGLSWAFAGVP). Over 198–201 (DGWR) the chain is Extracellular. Residues 202 to 222 (FTFGGALLPALLQAGVMPLLP) form a helical membrane-spanning segment. Topologically, residues 223–286 (DSPRFLLAQQ…FQSRDNMLQR (64 aa)) are cytoplasmic. The chain crosses the membrane as a helical span at residues 287–307 (LLVGAALVFLQQATGQPNILA). Residues 308–325 (YASTVLSSVGFHGNEAAT) are Extracellular-facing. The chain crosses the membrane as a helical span at residues 326–346 (LASTGFGVVKVGGTIPAIFLV). Over 347–353 (DKVGPKA) the chain is Cytoplasmic. The helical transmembrane segment at 354–374 (LLCVGVVVMMLSTATLGAITM) threads the bilayer. Topologically, residues 375–475 (QSRTHVSSLC…LHEVSPSLKW (101 aa)) are extracellular. N-linked (GlcNAc...) asparagine glycosylation is found at Asn-392, Asn-429, and Asn-438. The helical transmembrane segment at 476-496 (ISLVSLLVYVAGFSISLGPMV) threads the bilayer. Topologically, residues 497 to 511 (HVVLSAIFPTGIRGK) are cytoplasmic. The chain crosses the membrane as a helical span at residues 512-532 (AVSVISAFNWATNLLISMTFL). At 533-542 (TLTERIGLPT) the chain is on the extracellular side. Residues 543–563 (VIFSYSAMSFLLVVFVIVFVP) traverse the membrane as a helical segment. The Cytoplasmic portion of the chain corresponds to 564 to 610 (ETKGRSLEQISKELAMKNHLRGTLLCHRRKHKATAQPSQEEKALATV).

Belongs to the major facilitator superfamily. Sugar transporter (TC 2.A.1.1) family. Glucose transporter subfamily. In terms of tissue distribution, expressed in the main insulin-sensitive tissues, such as cardiac muscle, skeletal muscle and adipose tissue.

Its subcellular location is the cell membrane. The protein localises to the endomembrane system. It localises to the cytoplasm. It is found in the perinuclear region. It carries out the reaction D-glucose(out) = D-glucose(in). In terms of biological role, insulin-regulated facilitative glucose transporter. The polypeptide is Solute carrier family 2, facilitated glucose transporter member 12 (Danio rerio (Zebrafish)).